The primary structure comprises 451 residues: Glyceraldehyde-3-phosphate dehydrogenase B, chloroplastic (451 aa).

A disordered region spans residues 1–25; it reads MATHAALASTRIPTNTRFPSKTSHS. Residues 1–84 constitute a chloroplast transit peptide; that stretch reads MATHAALAST…STAVKGVTVA (84 aa). Polar residues predominate over residues 11–25; it reads RIPTNTRFPSKTSHS. NADP(+)-binding positions include 95–96, Asp119, and Arg164; that span reads RI. D-glyceraldehyde 3-phosphate is bound by residues 238–240, Thr269, Arg284, 297–298, and Arg320; these read SCT and TG. The Nucleophile role is filled by Cys239. NADP(+) is bound at residue Asn403.

Belongs to the glyceraldehyde-3-phosphate dehydrogenase family. In terms of assembly, tetramer of either four A chains (GAPDH 2) or two A and two B chains (GAPDH 1).

It localises to the plastid. It is found in the chloroplast. The catalysed reaction is D-glyceraldehyde 3-phosphate + phosphate + NADP(+) = (2R)-3-phospho-glyceroyl phosphate + NADPH + H(+). Its pathway is carbohydrate biosynthesis; Calvin cycle. In Pisum sativum (Garden pea), this protein is Glyceraldehyde-3-phosphate dehydrogenase B, chloroplastic (GAPB).